Consider the following 128-residue polypeptide: Small ribosomal subunit protein uS8c (128 aa).

The protein belongs to the universal ribosomal protein uS8 family. As to quaternary structure, part of the 30S ribosomal subunit.

It localises to the plastid. The protein resides in the chloroplast. Functionally, one of the primary rRNA binding proteins, it binds directly to 16S rRNA central domain where it helps coordinate assembly of the platform of the 30S subunit. The polypeptide is Small ribosomal subunit protein uS8c (rps8) (Gnetum parvifolium (Small-leaved jointfir)).